Consider the following 206-residue polypeptide: Octanoyltransferase (206 aa).

The 177-residue stretch at 30-206 (PETNDEIWLV…EFVTLLNNSI (177 aa)) folds into the BPL/LPL catalytic domain. Substrate contacts are provided by residues 69 to 76 (RGGQVTYH), 137 to 139 (SLG), and 150 to 152 (GIA). Catalysis depends on C168, which acts as the Acyl-thioester intermediate.

The protein belongs to the LipB family.

It localises to the cytoplasm. The enzyme catalyses octanoyl-[ACP] + L-lysyl-[protein] = N(6)-octanoyl-L-lysyl-[protein] + holo-[ACP] + H(+). Its pathway is protein modification; protein lipoylation via endogenous pathway; protein N(6)-(lipoyl)lysine from octanoyl-[acyl-carrier-protein]: step 1/2. Catalyzes the transfer of endogenously produced octanoic acid from octanoyl-acyl-carrier-protein onto the lipoyl domains of lipoate-dependent enzymes. Lipoyl-ACP can also act as a substrate although octanoyl-ACP is likely to be the physiological substrate. This Francisella tularensis subsp. tularensis (strain FSC 198) protein is Octanoyltransferase.